The sequence spans 509 residues: Bifunctional purine biosynthesis protein PurH (509 aa).

The MGS-like domain occupies 1–144 (MKRALISVSD…KNYAAVTVVV (144 aa)).

It belongs to the PurH family.

It catalyses the reaction (6R)-10-formyltetrahydrofolate + 5-amino-1-(5-phospho-beta-D-ribosyl)imidazole-4-carboxamide = 5-formamido-1-(5-phospho-D-ribosyl)imidazole-4-carboxamide + (6S)-5,6,7,8-tetrahydrofolate. The enzyme catalyses IMP + H2O = 5-formamido-1-(5-phospho-D-ribosyl)imidazole-4-carboxamide. Its pathway is purine metabolism; IMP biosynthesis via de novo pathway; 5-formamido-1-(5-phospho-D-ribosyl)imidazole-4-carboxamide from 5-amino-1-(5-phospho-D-ribosyl)imidazole-4-carboxamide (10-formyl THF route): step 1/1. It participates in purine metabolism; IMP biosynthesis via de novo pathway; IMP from 5-formamido-1-(5-phospho-D-ribosyl)imidazole-4-carboxamide: step 1/1. The chain is Bifunctional purine biosynthesis protein PurH from Listeria monocytogenes serotype 4a (strain HCC23).